Reading from the N-terminus, the 78-residue chain is UPF0349 protein YuzB (78 aa).

Belongs to the UPF0349 family.

The polypeptide is UPF0349 protein YuzB (yuzB) (Bacillus subtilis (strain 168)).